The chain runs to 195 residues: Imidazoleglycerol-phosphate dehydratase (195 aa).

It belongs to the imidazoleglycerol-phosphate dehydratase family.

Its subcellular location is the cytoplasm. It catalyses the reaction D-erythro-1-(imidazol-4-yl)glycerol 3-phosphate = 3-(imidazol-4-yl)-2-oxopropyl phosphate + H2O. It participates in amino-acid biosynthesis; L-histidine biosynthesis; L-histidine from 5-phospho-alpha-D-ribose 1-diphosphate: step 6/9. This is Imidazoleglycerol-phosphate dehydratase from Beijerinckia indica subsp. indica (strain ATCC 9039 / DSM 1715 / NCIMB 8712).